The chain runs to 314 residues: Vomeronasal type-1 receptor 98 (314 aa).

Over 1–19 (MNKDTTMYCSAYIRDVFFC) the chain is Extracellular. Residues 20–40 (EIGVGISANSCLLLFHIFMFI) traverse the membrane as a helical segment. Residues 41 to 49 (RGHRPRLTD) lie on the Cytoplasmic side of the membrane. Residues 50-70 (LPIGLMALIHLLMLLLAAYIA) form a helical membrane-spanning segment. The Extracellular segment spans residues 71–92 (KDFFMSSGWDDITCKLFIFLHR). A disulfide bond links Cys84 and Cys171. The helical transmembrane segment at 93 to 113 (FFRSLSVCATCMLSVFQTIIL) threads the bilayer. At 114–133 (CPQSSHLAKFKPNSPYHLSC) the chain is on the cytoplasmic side. The helical transmembrane segment at 134 to 154 (FFIFMSIFYTSISSHILIAAI) threads the bilayer. Topologically, residues 155 to 186 (ATQNLTSVNLIYITKSCSFLPMSSSMQRTFST) are extracellular. A glycan (N-linked (GlcNAc...) asparagine) is linked at Asn158. Residues 187 to 207 (LLAFRNAFLIGLMGLSTCYMA) form a helical membrane-spanning segment. The Cytoplasmic segment spans residues 208–235 (TLLCRHKTRSQRLQNSKLSPKATPEQRA). A helical transmembrane segment spans residues 236–256 (IWTLLMFMSFFLVMSTFDSII). At 257 to 268 (SYSRTIFQGNPS) the chain is on the extracellular side. A helical transmembrane segment spans residues 269 to 289 (LYCAQILVAHSYAVVSPMLVL). Residues 290-314 (SNENRLTNPLISMYERIVRLDFLCW) are Cytoplasmic-facing.

The protein belongs to the G-protein coupled receptor 1 family.

It localises to the cell membrane. Putative pheromone receptor implicated in the regulation of social as well as reproductive behavior. The sequence is that of Vomeronasal type-1 receptor 98 (Vom1r98) from Rattus norvegicus (Rat).